Here is a 451-residue protein sequence, read N- to C-terminus: Phosphoglucosamine mutase (451 aa).

Ser-102 serves as the catalytic Phosphoserine intermediate. Mg(2+) contacts are provided by Ser-102, Asp-243, Asp-245, and Asp-247. Phosphoserine is present on Ser-102.

Belongs to the phosphohexose mutase family. Mg(2+) is required as a cofactor. In terms of processing, activated by phosphorylation.

It carries out the reaction alpha-D-glucosamine 1-phosphate = D-glucosamine 6-phosphate. Catalyzes the conversion of glucosamine-6-phosphate to glucosamine-1-phosphate. This is Phosphoglucosamine mutase from Chelativorans sp. (strain BNC1).